We begin with the raw amino-acid sequence, 221 residues long: PKHD-type hydroxylase P9211_12561 (221 aa).

Residues 80–174 (KVHGTMFTRS…RIVCVGWIQS (95 aa)) enclose the Fe2OG dioxygenase domain. Residues His98, Asp100, and His155 each coordinate Fe cation. 2-oxoglutarate is bound at residue Arg165.

Requires Fe(2+) as cofactor. It depends on L-ascorbate as a cofactor.

In Prochlorococcus marinus (strain MIT 9211), this protein is PKHD-type hydroxylase P9211_12561.